Here is a 493-residue protein sequence, read N- to C-terminus: Protein nucleotidyltransferase YdiU (493 aa).

The ATP site is built by glycine 94, glycine 96, arginine 97, lysine 117, aspartate 129, glycine 130, arginine 180, and arginine 187. Residue aspartate 256 is the Proton acceptor of the active site. Asparagine 257 and aspartate 266 together coordinate Mg(2+). Position 266 (aspartate 266) interacts with ATP.

It belongs to the SELO family. Mg(2+) is required as a cofactor. Mn(2+) serves as cofactor.

The enzyme catalyses L-seryl-[protein] + ATP = 3-O-(5'-adenylyl)-L-seryl-[protein] + diphosphate. It catalyses the reaction L-threonyl-[protein] + ATP = 3-O-(5'-adenylyl)-L-threonyl-[protein] + diphosphate. The catalysed reaction is L-tyrosyl-[protein] + ATP = O-(5'-adenylyl)-L-tyrosyl-[protein] + diphosphate. It carries out the reaction L-histidyl-[protein] + UTP = N(tele)-(5'-uridylyl)-L-histidyl-[protein] + diphosphate. The enzyme catalyses L-seryl-[protein] + UTP = O-(5'-uridylyl)-L-seryl-[protein] + diphosphate. It catalyses the reaction L-tyrosyl-[protein] + UTP = O-(5'-uridylyl)-L-tyrosyl-[protein] + diphosphate. Functionally, nucleotidyltransferase involved in the post-translational modification of proteins. It can catalyze the addition of adenosine monophosphate (AMP) or uridine monophosphate (UMP) to a protein, resulting in modifications known as AMPylation and UMPylation. The protein is Protein nucleotidyltransferase YdiU of Hahella chejuensis (strain KCTC 2396).